Reading from the N-terminus, the 938-residue chain is Isoleucine--tRNA ligase (938 aa).

A 'HIGH' region motif is present at residues 58 to 68 (PYANGSIHIGH). Lys-183 carries the post-translational modification N6-acetyllysine. Glu-561 serves as a coordination point for L-isoleucyl-5'-AMP. Positions 602–606 (KMSKS) match the 'KMSKS' region motif. An ATP-binding site is contributed by Lys-605. Positions 901, 904, 921, and 924 each coordinate Zn(2+).

Belongs to the class-I aminoacyl-tRNA synthetase family. IleS type 1 subfamily. Monomer. Zn(2+) is required as a cofactor.

The protein localises to the cytoplasm. The catalysed reaction is tRNA(Ile) + L-isoleucine + ATP = L-isoleucyl-tRNA(Ile) + AMP + diphosphate. Functionally, catalyzes the attachment of isoleucine to tRNA(Ile). As IleRS can inadvertently accommodate and process structurally similar amino acids such as valine, to avoid such errors it has two additional distinct tRNA(Ile)-dependent editing activities. One activity is designated as 'pretransfer' editing and involves the hydrolysis of activated Val-AMP. The other activity is designated 'posttransfer' editing and involves deacylation of mischarged Val-tRNA(Ile). This chain is Isoleucine--tRNA ligase, found in Escherichia coli O6:K15:H31 (strain 536 / UPEC).